The following is a 354-amino-acid chain: Protein-glutamate methylesterase/protein-glutamine glutaminase 2 (354 aa).

Positions 3-120 (RVVVVDDSMS…PADLADYARD (118 aa)) constitute a Response regulatory domain. Asp-54 is modified (4-aspartylphosphate). Residues 164 to 354 (ATRLSRVIAI…MGARLSEALQ (191 aa)) enclose the CheB-type methylesterase domain. Active-site residues include Ser-176, His-202, and Asp-298.

This sequence belongs to the CheB family. Phosphorylated by CheA. Phosphorylation of the N-terminal regulatory domain activates the methylesterase activity.

Its subcellular location is the cytoplasm. The catalysed reaction is [protein]-L-glutamate 5-O-methyl ester + H2O = L-glutamyl-[protein] + methanol + H(+). It catalyses the reaction L-glutaminyl-[protein] + H2O = L-glutamyl-[protein] + NH4(+). Involved in chemotaxis. Part of a chemotaxis signal transduction system that modulates chemotaxis in response to various stimuli. Catalyzes the demethylation of specific methylglutamate residues introduced into the chemoreceptors (methyl-accepting chemotaxis proteins or MCP) by CheR. Also mediates the irreversible deamidation of specific glutamine residues to glutamic acid. This chain is Protein-glutamate methylesterase/protein-glutamine glutaminase 2, found in Burkholderia thailandensis (strain ATCC 700388 / DSM 13276 / CCUG 48851 / CIP 106301 / E264).